The primary structure comprises 320 residues: o-succinylbenzoate synthase (320 aa).

K133 (proton donor) is an active-site residue. Residues D161, E190, and D213 each contribute to the Mg(2+) site. K235 functions as the Proton acceptor in the catalytic mechanism.

Belongs to the mandelate racemase/muconate lactonizing enzyme family. MenC type 1 subfamily. A divalent metal cation is required as a cofactor.

It carries out the reaction (1R,6R)-6-hydroxy-2-succinyl-cyclohexa-2,4-diene-1-carboxylate = 2-succinylbenzoate + H2O. It functions in the pathway quinol/quinone metabolism; 1,4-dihydroxy-2-naphthoate biosynthesis; 1,4-dihydroxy-2-naphthoate from chorismate: step 4/7. The protein operates within quinol/quinone metabolism; menaquinone biosynthesis. In terms of biological role, converts 2-succinyl-6-hydroxy-2,4-cyclohexadiene-1-carboxylate (SHCHC) to 2-succinylbenzoate (OSB). The chain is o-succinylbenzoate synthase from Escherichia coli O139:H28 (strain E24377A / ETEC).